The sequence spans 230 residues: Ureidoacrylate amidohydrolase RutB (230 aa).

D24 (proton acceptor) is an active-site residue. Residue K133 is part of the active site. Residue C166 is the Nucleophile of the active site.

This sequence belongs to the isochorismatase family. RutB subfamily.

The enzyme catalyses (Z)-3-ureidoacrylate + H2O + H(+) = (Z)-3-aminoacrylate + NH4(+) + CO2. It carries out the reaction (Z)-3-ureidoacrylate + H2O = (Z)-3-aminoacrylate + carbamate + H(+). The catalysed reaction is (Z)-2-methylureidoacrylate + H2O + H(+) = (Z)-2-methylaminoacrylate + NH4(+) + CO2. Hydrolyzes ureidoacrylate to form aminoacrylate and carbamate. The carbamate hydrolyzes spontaneously, thereby releasing one of the nitrogen atoms of the pyrimidine ring as ammonia and one of its carbon atoms as CO2. The polypeptide is Ureidoacrylate amidohydrolase RutB (Escherichia coli O103:H2 (strain 12009 / EHEC)).